Reading from the N-terminus, the 733-residue chain is Microtubule-associated protein tau (733 aa).

Positions 1–16 (MADPRQEFDTMEDHAG) are enriched in basic and acidic residues. Residues 1 to 548 (MADPRQEFDT…PVPMPDLKNV (548 aa)) are disordered. Ala-2 is modified (N-acetylalanine). Phosphotyrosine; by FYN is present on Tyr-18. Lys-33 participates in a covalent cross-link: Glycyl lysine isopeptide (Lys-Gly) (interchain with G-Cter in ubiquitin). Phosphoserine is present on residues Ser-35 and Ser-50. Residues 50–60 (SETSDAKSTPT) show a composition bias toward polar residues. Phosphothreonine is present on residues Thr-58, Thr-60, and Thr-100. Arg-115 is subject to Omega-N-methylarginine. Residues 126 to 137 (SDWTRQQVSSMS) show a composition bias toward polar residues. A compositionally biased stretch (basic and acidic residues) spans 157 to 172 (RPEDIEKSHPASELLR). A Phosphoserine modification is found at Ser-188. Residues 189–202 (EEEVDEDLTVDESS) show a composition bias toward acidic residues. Polar residues predominate over residues 203 to 212 (QDSPPSQASL). Composition is skewed to basic and acidic residues over residues 270–294 (EEGH…KEQD) and 354–366 (ASKD…EKKA). Residues 413–427 (KHVSSVTPRNGSPGT) are compositionally biased toward polar residues. Thr-445 bears the Phosphothreonine mark. An Omega-N-methylarginine modification is found at Arg-447. Ser-451 carries the phosphoserine modification. N6,N6-dimethyllysine; alternate is present on Lys-455. Position 455 is an N6-acetyllysine; alternate (Lys-455). 3 positions are modified to phosphothreonine: Thr-461, Thr-467, and Thr-468. Phosphoserine is present on Ser-470. Phosphothreonine is present on Thr-473. Phosphoserine occurs at positions 477, 483, and 487. Residues 479-506 (EPPKSGERSGYSSPGSPGTPGSRSRTPS) show a composition bias toward low complexity. Phosphotyrosine is present on Tyr-489. Phosphoserine occurs at positions 490, 491, and 494. 2 positions are modified to phosphothreonine: Thr-497 and Thr-504. At Ser-506 the chain carries Phosphoserine. At Thr-509 the chain carries Phosphothreonine. The residue at position 517 (Lys-517) is an N6-acetyllysine. A Phosphothreonine modification is found at Thr-523. Ser-527, Ser-529, and Ser-531 each carry phosphoserine. 4 Tau/MAP repeats span residues 536–566 (QTAP…GGGK), 567–597 (VQII…GGGS), 598–628 (VQIV…GGGQ), and 629–660 (VEVK…GGGN). Lys-546 participates in a covalent cross-link: Glycyl lysine isopeptide (Lys-Gly) (interchain with G-Cter in ubiquitin). N6-acetyllysine; alternate is present on Lys-551. An N6-methyllysine; alternate modification is found at Lys-551. Residue Lys-551 forms a Glycyl lysine isopeptide (Lys-Gly) (interchain with G-Cter in ubiquitin); alternate linkage. Phosphoserine; by MARK1, BRSK1, BRSK2 and PHK is present on Ser-554. Residue Lys-559 forms a Glycyl lysine isopeptide (Lys-Gly) (interchain with G-Cter in ubiquitin) linkage. At Lys-573 the chain carries N6-acetyllysine; alternate. Lys-573 participates in a covalent cross-link: Glycyl lysine isopeptide (Lys-Gly) (interchain with G-Cter in ubiquitin); alternate. Phosphoserine is present on residues Ser-577 and Ser-581. An N6-acetyllysine modification is found at Lys-582. Cysteines 583 and 614 form a disulfide. Ser-585 carries the phosphoserine modification. Position 590 is an N6-acetyllysine; alternate (Lys-590). A Glycyl lysine isopeptide (Lys-Gly) (interchain with G-Cter in ubiquitin); alternate cross-link involves residue Lys-590. Ser-597 bears the Phosphoserine mark. Residue Lys-603 is modified to N6,N6-dimethyllysine; alternate. Lys-603, Lys-609, and Lys-613 each carry N6-acetyllysine; alternate. Glycyl lysine isopeptide (Lys-Gly) (interchain with G-Cter in ubiquitin); alternate cross-links involve residues Lys-603, Lys-609, and Lys-613. Residue Ser-616 is modified to Phosphoserine. 3 positions are modified to N6-acetyllysine; alternate: Lys-623, Lys-635, and Lys-639. Glycyl lysine isopeptide (Lys-Gly) (interchain with G-Cter in ubiquitin); alternate cross-links involve residues Lys-623, Lys-635, and Lys-639. The residue at position 641 (Arg-641) is an Omega-N-methylarginine. At Ser-644 the chain carries Phosphoserine. A Glycyl lysine isopeptide (Lys-Gly) (interchain with G-Cter in ubiquitin) cross-link involves residue Lys-645. Ser-648 carries the post-translational modification Phosphoserine. Lys-661 carries the post-translational modification N6-acetyllysine; alternate. Lys-661 is covalently cross-linked (Glycyl lysine isopeptide (Lys-Gly) (interchain with G-Cter in ubiquitin); alternate). Residue Lys-667 forms a Glycyl lysine isopeptide (Lys-Gly) (interchain with G-Cter in ubiquitin) linkage. Position 677 is an N6-acetyllysine; alternate (Lys-677). Residue Lys-677 forms a Glycyl lysine isopeptide (Lys-Gly) (interchain with G-Cter in ubiquitin); alternate linkage. Tyr-686 is modified (phosphotyrosine). At Ser-688 the chain carries Phosphoserine. The tract at residues 690 to 709 (VVSGDTSPRHLSNVSSTGSI) is disordered. Ser-692 carries the post-translational modification Phosphoserine; alternate. Residue Ser-692 is glycosylated (O-linked (GlcNAc...) serine; alternate). The span at 693 to 708 (GDTSPRHLSNVSSTGS) shows a compositional bias: polar residues. Thr-695 is modified (phosphothreonine). Phosphoserine is present on residues Ser-696, Ser-701, Ser-708, and Ser-714. Thr-719 is subject to Phosphothreonine.

In terms of assembly, interacts with MARK1, MARK2, MARK3 and MARK4. Interacts with SQSTM1 when polyubiquitinated. Interacts with PSMC2 through SQSTM1. Interacts with FKBP4. Binds to CSNK1D. Interacts with SGK1. Interacts with EPM2A; the interaction dephosphorylates MAPT at Ser-369. Interacts with PIN1. Interacts with LRRK2. Interacts with LRP1, leading to endocytosis; this interaction is reduced in the presence of LRPAP1/RAP. In terms of processing, polyubiquitinated. Requires functional TRAF6 and may provoke SQSTM1-dependent degradation by the proteasome. Phosphorylation at various serine and threonine residues in S-P or T-P motifs by proline-directed protein kinases (PDPK1, CDK1, CDK5, GSK3, MAPK) (a few sites per protein in interphase, more in mitosis), and at serine residues in K-X-G-S motifs by MAP/microtubule affinity-regulating kinase (MARK1, MARK2, MARK3, MARK4), causing detachment from microtubules, and their disassembly. Phosphorylated by PHK. Dephosphorylation at several serine and threonine residues by the serine/threonine phosphatase PPP5C. Phosphorylation at Ser-554 by BRSK1 and BRSK2 in neurons affects ability to bind microtubules and plays a role in neuron polarization. Phosphorylation at Ser-188 by SGK1 mediates microtubule depolymerization and neurite formation in hippocampal neurons. As to expression, expressed in neurons and at a lower level in the liver and kidney. Isoform PNS-tau is expressed in the peripheral nervous system while the others are expressed in the central nervous system.

The protein resides in the cytoplasm. It is found in the cytosol. It localises to the cell membrane. Its subcellular location is the cytoskeleton. The protein localises to the cell projection. The protein resides in the axon. It is found in the dendrite. It localises to the secreted. In terms of biological role, promotes microtubule assembly and stability, and might be involved in the establishment and maintenance of neuronal polarity. The C-terminus binds axonal microtubules while the N-terminus binds neural plasma membrane components, suggesting that tau functions as a linker protein between both. Axonal polarity is predetermined by tau localization (in the neuronal cell) in the domain of the cell body defined by the centrosome. The short isoforms allow plasticity of the cytoskeleton whereas the longer isoforms may preferentially play a role in its stabilization. This chain is Microtubule-associated protein tau, found in Mus musculus (Mouse).